Here is a 521-residue protein sequence, read N- to C-terminus: uncharacterized protein (521 aa).

9 consecutive transmembrane segments (helical) span residues 53–73, 78–98, 158–178, 186–206, 282–302, 336–356, 380–400, 407–427, and 487–507; these read MISVAGAIGTGLVIGSGSALL, GSLFIAYLMTGINLYVVLISL, NVGIWVAVFLVVILAINLLHV, FWLSAVKILVLVTLIITCIVI, LFRIATFYVIGVFVLGLCVPY, VINACLLVFIISSANSDIYIG, GIPWVGCLVTSSFGLLAFMNT, IFGYFSSAVTVFGTINWINIL, and ITSYIGIAAYVIMILGWKFTF.

This sequence belongs to the amino acid-polyamine-organocation (APC) superfamily.

The protein localises to the membrane. This is an uncharacterized protein from Schizosaccharomyces pombe (strain 972 / ATCC 24843) (Fission yeast).